The primary structure comprises 166 residues: Lipoprotein signal peptidase (166 aa).

The next 4 helical transmembrane spans lie at 9 to 29 (ASGA…FDQL), 45 to 65 (ALTS…FGFL), 71 to 91 (WQRW…CFLL), and 100 to 120 (FSLS…DRLV). Catalysis depends on residues D126 and D144. Residues 135 to 155 (WHFPAFNLADSAITIGAVLLI) traverse the membrane as a helical segment.

The protein belongs to the peptidase A8 family.

It is found in the cell inner membrane. The catalysed reaction is Release of signal peptides from bacterial membrane prolipoproteins. Hydrolyzes -Xaa-Yaa-Zaa-|-(S,diacylglyceryl)Cys-, in which Xaa is hydrophobic (preferably Leu), and Yaa (Ala or Ser) and Zaa (Gly or Ala) have small, neutral side chains.. The protein operates within protein modification; lipoprotein biosynthesis (signal peptide cleavage). Its function is as follows. This protein specifically catalyzes the removal of signal peptides from prolipoproteins. In Burkholderia multivorans (strain ATCC 17616 / 249), this protein is Lipoprotein signal peptidase.